The sequence spans 231 residues: 2,3-bisphosphoglycerate-dependent phosphoglycerate mutase (231 aa).

Residues 8-15 (RHGESEWN), 21-22 (TG), Arg-60, 87-90 (ERHY), Lys-98, 114-115 (RR), and 183-184 (GN) contribute to the substrate site. The Tele-phosphohistidine intermediate role is filled by His-9. Glu-87 serves as the catalytic Proton donor/acceptor.

It belongs to the phosphoglycerate mutase family. BPG-dependent PGAM subfamily.

The enzyme catalyses (2R)-2-phosphoglycerate = (2R)-3-phosphoglycerate. It functions in the pathway carbohydrate degradation; glycolysis; pyruvate from D-glyceraldehyde 3-phosphate: step 3/5. In terms of biological role, catalyzes the interconversion of 2-phosphoglycerate and 3-phosphoglycerate. This is 2,3-bisphosphoglycerate-dependent phosphoglycerate mutase from Streptococcus equi subsp. zooepidemicus (strain H70).